Here is a 327-residue protein sequence, read N- to C-terminus: Vacuolar protein sorting-associated protein 26A (327 aa).

Positions 305–327 are disordered; the sequence is RNFHQRYESPEPRPSLSAEQPEM.

The protein belongs to the VPS26 family. Component of the heterotrimeric retromer cargo-selective complex (CSC) which is believed to associate with variable sorting nexins to form functionally distinct retromer complex variants.

The protein localises to the cytoplasm. It localises to the endosome membrane. Its subcellular location is the early endosome. Acts as a component of the retromer cargo-selective complex (CSC). The CSC is believed to be the core functional component of retromer or respective retromer complex variants acting to prevent missorting of selected transmembrane cargo proteins into the lysosomal degradation pathway. Retromer mediates retrograde transport of cargo proteins from endosomes to the trans-Golgi network (TGN). This Danio rerio (Zebrafish) protein is Vacuolar protein sorting-associated protein 26A (vps26a).